A 143-amino-acid polypeptide reads, in one-letter code: Large ribosomal subunit protein uL11 (143 aa).

This sequence belongs to the universal ribosomal protein uL11 family. In terms of assembly, part of the ribosomal stalk of the 50S ribosomal subunit. Interacts with L10 and the large rRNA to form the base of the stalk. L10 forms an elongated spine to which L12 dimers bind in a sequential fashion forming a multimeric L10(L12)X complex. In terms of processing, one or more lysine residues are methylated.

Functionally, forms part of the ribosomal stalk which helps the ribosome interact with GTP-bound translation factors. In Dechloromonas aromatica (strain RCB), this protein is Large ribosomal subunit protein uL11.